Consider the following 124-residue polypeptide: Seripauperin-15 (124 aa).

Positions 1-20 (MVKLTSIAAGVAAIAAGVAA) are cleaved as a signal peptide.

It belongs to the SRP1/TIP1 family. Seripauperin subfamily.

The chain is Seripauperin-15 (PAU15) from Saccharomyces cerevisiae (strain ATCC 204508 / S288c) (Baker's yeast).